The following is a 397-amino-acid chain: Elongation factor Tu (397 aa).

In terms of domain architecture, tr-type G spans 10 to 206; that stretch reads KPHVNIGTIG…AVDSYIPTPE (197 aa). Residues 19-26 are G1; that stretch reads GHVDHGKT. Residue 19–26 participates in GTP binding; that stretch reads GHVDHGKT. T26 serves as a coordination point for Mg(2+). The interval 60–64 is G2; that stretch reads GITIN. Residues 81–84 are G3; that stretch reads DCPG. GTP contacts are provided by residues 81 to 85 and 136 to 139; these read DCPGH and NKAD. Positions 136 to 139 are G4; the sequence is NKAD. Residues 174–176 are G5; the sequence is SAL.

This sequence belongs to the TRAFAC class translation factor GTPase superfamily. Classic translation factor GTPase family. EF-Tu/EF-1A subfamily. Monomer.

It is found in the cytoplasm. It carries out the reaction GTP + H2O = GDP + phosphate + H(+). GTP hydrolase that promotes the GTP-dependent binding of aminoacyl-tRNA to the A-site of ribosomes during protein biosynthesis. The chain is Elongation factor Tu from Clostridium beijerinckii (strain ATCC 51743 / NCIMB 8052) (Clostridium acetobutylicum).